The sequence spans 626 residues: Phosphoenolpyruvate carboxykinase (ATP) 2 (626 aa).

Disordered stretches follow at residues 1-23 (MASPNGGVTTYDYHDSDSAAPVN) and 64-86 (PNLVKGDPEATKGAPPVPIKHQQ). 324 to 331 (GLSGTGKT) lines the ATP pocket.

The protein belongs to the phosphoenolpyruvate carboxykinase (ATP) family. In terms of assembly, homohexamer.

The protein resides in the cytoplasm. It carries out the reaction oxaloacetate + ATP = phosphoenolpyruvate + ADP + CO2. Its pathway is carbohydrate biosynthesis; gluconeogenesis. The polypeptide is Phosphoenolpyruvate carboxykinase (ATP) 2 (PCK2) (Urochloa panicoides (Panic liverseed grass)).